The chain runs to 508 residues: Zinc finger CCCH-type with G patch domain-containing protein (508 aa).

The C3H1-type zinc-finger motif lies at 154-177 (PCNYYLEGECRFDETRCRYSHGAL). A disordered region spans residues 253–279 (DDELSSDSEETNETDGSDAANESDMDD). A G-patch domain is found at 309–355 (TRGIGSKLMASMGYIHGTGLGSDGRGIVTPVSAQILPQGRSLDACME). Polar residues predominate over residues 486 to 495 (QAQESSLSKE). The tract at residues 486–508 (QAQESSLSKEQQTRKSKNKMFEF) is disordered. A compositionally biased stretch (basic residues) spans 499–508 (RKSKNKMFEF).

Its subcellular location is the nucleus. Transcription repressor. This is Zinc finger CCCH-type with G patch domain-containing protein from Drosophila virilis (Fruit fly).